The sequence spans 282 residues: UDP-3-O-acyl-N-acetylglucosamine deacetylase (282 aa).

The Zn(2+) site is built by His80, His240, and Asp244. The active-site Proton donor is His267.

Belongs to the LpxC family. It depends on Zn(2+) as a cofactor.

Its subcellular location is the plastid. It is found in the chloroplast. The enzyme catalyses a UDP-3-O-[(3R)-3-hydroxyacyl]-N-acetyl-alpha-D-glucosamine + H2O = a UDP-3-O-[(3R)-3-hydroxyacyl]-alpha-D-glucosamine + acetate. The protein operates within glycolipid biosynthesis; lipid IV(A) biosynthesis; lipid IV(A) from (3R)-3-hydroxytetradecanoyl-[acyl-carrier-protein] and UDP-N-acetyl-alpha-D-glucosamine: step 2/6. Functionally, catalyzes the hydrolysis of UDP-3-O-myristoyl-N-acetylglucosamine to form UDP-3-O-myristoylglucosamine and acetate. Involved in the biosynthesis of lipid A, a phosphorylated glycolipid that in bacteria anchors the lipopolysaccharide to the outer membrane of the cell. The target for the lipopolysaccharides produced in the chloroplast could either be the cell envelope of the eukaryote or the plastid membrane. The sequence is that of UDP-3-O-acyl-N-acetylglucosamine deacetylase from Cyanidium caldarium (Red alga).